Consider the following 465-residue polypeptide: Cytochrome P450 85A2 (465 aa).

Residues glycine 2–leucine 22 traverse the membrane as a helical segment. Heme is bound at residue cysteine 415. Cysteine 462 is lipidated: S-farnesyl cysteine. A Farnesylation CAAX motif motif is present at residues cysteine 462–tyrosine 465.

The protein belongs to the cytochrome P450 family. Heme serves as cofactor. Isoprenylated (farnesylated); this addition of a 15-carbon farnesyl isoprenoid to the carboxy terminus is required for endoplasmic reticulum localization and essential for the biosynthesis of brassinolide. As to expression, expressed in stems, hypocotyls, leaves, siliques, shoots, and roots, with a higher expression in apical shoots.

It is found in the membrane. The protein localises to the endoplasmic reticulum. It catalyses the reaction 6-deoxoteasterone + reduced [NADPH--hemoprotein reductase] + O2 = 6alpha-hydroxyteasterone + oxidized [NADPH--hemoprotein reductase] + H2O + H(+). The enzyme catalyses 6alpha-hydroxytyphasterol + reduced [NADPH--hemoprotein reductase] + O2 = teasterone + oxidized [NADPH--hemoprotein reductase] + 2 H2O + H(+). It carries out the reaction 3-dehydro-6-deoxoteasterone + reduced [NADPH--hemoprotein reductase] + O2 = 3-dehydro-6alpha-hydroxyteasterone + oxidized [NADPH--hemoprotein reductase] + H2O + H(+). The catalysed reaction is 3-dehydro-6alpha-hydroxyteasterone + reduced [NADPH--hemoprotein reductase] + O2 = 3-dehydroteasterone + oxidized [NADPH--hemoprotein reductase] + 2 H2O + H(+). It catalyses the reaction 6-deoxotyphasterol + reduced [NADPH--hemoprotein reductase] + O2 = 6alpha-hydroxytyphasterol + oxidized [NADPH--hemoprotein reductase] + H2O + H(+). The enzyme catalyses 6alpha-hydroxytyphasterol + reduced [NADPH--hemoprotein reductase] + O2 = typhasterol + oxidized [NADPH--hemoprotein reductase] + 2 H2O + H(+). It carries out the reaction 6-deoxocastasterone + reduced [NADPH--hemoprotein reductase] + O2 = 6alpha-hydroxycastasterone + oxidized [NADPH--hemoprotein reductase] + H2O + H(+). The catalysed reaction is 6alpha-hydroxycastasterone + reduced [NADPH--hemoprotein reductase] + O2 = castasterone + oxidized [NADPH--hemoprotein reductase] + 2 H2O + H(+). It catalyses the reaction 6-deoxo-28-norteasterone + 2 reduced [NADPH--hemoprotein reductase] + 2 O2 = 28-norteasterone + 2 oxidized [NADPH--hemoprotein reductase] + 3 H2O + 2 H(+). The enzyme catalyses 6-deoxo-28-norteasterone + reduced [NADPH--hemoprotein reductase] + O2 = 6alpha-hydroxy-28-norteasterone + oxidized [NADPH--hemoprotein reductase] + H2O + H(+). It carries out the reaction 6alpha-hydroxy-28-norteasterone + reduced [NADPH--hemoprotein reductase] + O2 = 28-norteasterone + oxidized [NADPH--hemoprotein reductase] + 2 H2O + H(+). The catalysed reaction is 6-deoxo-28-nortyphasterol + 2 reduced [NADPH--hemoprotein reductase] + 2 O2 = 28-nortyphasterol + 2 oxidized [NADPH--hemoprotein reductase] + 3 H2O + 2 H(+). It catalyses the reaction 6-deoxo-28-nortyphasterol + reduced [NADPH--hemoprotein reductase] + O2 = 6alpha-hydroxy-28-nortyphasterol + oxidized [NADPH--hemoprotein reductase] + H2O + H(+). The enzyme catalyses 6alpha-hydroxy-28-nortyphasterol + reduced [NADPH--hemoprotein reductase] + O2 = 28-nortyphasterol + oxidized [NADPH--hemoprotein reductase] + 2 H2O + H(+). It carries out the reaction 6-deoxo-28-norcastasterone + 2 reduced [NADPH--hemoprotein reductase] + 2 O2 = 28-norcastasterone + 2 oxidized [NADPH--hemoprotein reductase] + 3 H2O + 2 H(+). The catalysed reaction is 6-deoxo-28-norcastasterone + reduced [NADPH--hemoprotein reductase] + O2 = 6alpha-hydroxy-28-norcastasterone + oxidized [NADPH--hemoprotein reductase] + H2O + H(+). It catalyses the reaction 6alpha-hydroxy-28-norcastasterone + reduced [NADPH--hemoprotein reductase] + O2 = 28-norcastasterone + oxidized [NADPH--hemoprotein reductase] + 2 H2O + H(+). The enzyme catalyses 3-dehydro-6-deoxo-28-norteasterone + 2 reduced [NADPH--hemoprotein reductase] + 2 O2 = 6-dehydro-28-norteasterone + 2 oxidized [NADPH--hemoprotein reductase] + 3 H2O + 2 H(+). It carries out the reaction 3-dehydro-6-deoxo-28-norteasterone + reduced [NADPH--hemoprotein reductase] + O2 = 3-dehydro-6alpha-hydroxy-28-norteasterone + oxidized [NADPH--hemoprotein reductase] + H2O + H(+). The catalysed reaction is 3-dehydro-6alpha-hydroxy-28-norteasterone + reduced [NADPH--hemoprotein reductase] + O2 = 6-dehydro-28-norteasterone + oxidized [NADPH--hemoprotein reductase] + 2 H2O + H(+). It catalyses the reaction teasterone + reduced [NADPH--hemoprotein reductase] + O2 = 7-oxateasterone + oxidized [NADPH--hemoprotein reductase] + H2O + H(+). The enzyme catalyses castasterone + reduced [NADPH--hemoprotein reductase] + O2 = brassinolide + oxidized [NADPH--hemoprotein reductase] + H2O + H(+). It carries out the reaction typhasterol + reduced [NADPH--hemoprotein reductase] + O2 = 7-oxatyphasterol + oxidized [NADPH--hemoprotein reductase] + H2O + H(+). The catalysed reaction is 6-deoxocastasterone + 2 reduced [NADPH--hemoprotein reductase] + 2 O2 = castasterone + 2 oxidized [NADPH--hemoprotein reductase] + 3 H2O + 2 H(+). It catalyses the reaction 6-deoxoteasterone + 2 reduced [NADPH--hemoprotein reductase] + 2 O2 = teasterone + 2 oxidized [NADPH--hemoprotein reductase] + 3 H2O + 2 H(+). The enzyme catalyses 6-deoxotyphasterol + 2 reduced [NADPH--hemoprotein reductase] + 2 O2 = typhasterol + 2 oxidized [NADPH--hemoprotein reductase] + 3 H2O + 2 H(+). It carries out the reaction 3-dehydro-6-deoxoteasterone + 2 reduced [NADPH--hemoprotein reductase] + 2 O2 = 3-dehydroteasterone + 2 oxidized [NADPH--hemoprotein reductase] + 3 H2O + 2 H(+). It functions in the pathway plant hormone biosynthesis; brassinosteroid biosynthesis. Mediates Baeyer-Villiger oxidation and catalyzes the C6-oxidation step and lactonization in brassinosteroids biosynthesis. Converts 6-deoxocastasterone (6-deoxoCS) to castasterone (CS), and castasterone to brassinolide (BL). May also convert 6-deoxoteasterone (6-deoxoTE) to teasterone (TE), 3-dehydro-6-deoxoteasterone (6-deoxo3DT, 6-deoxo-3-DHT) to 3-dehydroteasterone (3DT, 3-DHT), and 6-deoxotyphasterol (6-deoxoTY) to typhasterol (TY). Also seems to be able to convert teasterone (TE) and typhasterol (TY) to 7-oxateasterone (7-OXTE) and 7-oxatyphasterol (7-OXTY), respectively. Catalyzes the conversion of 6-deoxo-28-norteasterone (6-deoxo-28-norTE) to 28-norteasterone (28-norTE), 6-deoxo-28-nordeoxoteasterone (6-deoxo-28-nor-3-DHT) to 28-nordeoxoteasterone (28-nor-3-DHT), 6-deoxo-28-nortyphasterol (6-deoxo-28-norTY) to 28-nortyphasterol (28-norTY) and 6-deoxo-28-norcastasterone (6-deoxo-28-norCS) to 28-norcastasterone (28-norCS). Involved in a negative regulation of responses to abscisic acid (ABA) and drought tolerance. In Arabidopsis thaliana (Mouse-ear cress), this protein is Cytochrome P450 85A2 (CYP85A2).